The following is a 243-amino-acid chain: 2-C-methyl-D-erythritol 4-phosphate cytidylyltransferase (243 aa).

It belongs to the IspD/TarI cytidylyltransferase family. IspD subfamily.

It catalyses the reaction 2-C-methyl-D-erythritol 4-phosphate + CTP + H(+) = 4-CDP-2-C-methyl-D-erythritol + diphosphate. It participates in isoprenoid biosynthesis; isopentenyl diphosphate biosynthesis via DXP pathway; isopentenyl diphosphate from 1-deoxy-D-xylulose 5-phosphate: step 2/6. Its function is as follows. Catalyzes the formation of 4-diphosphocytidyl-2-C-methyl-D-erythritol from CTP and 2-C-methyl-D-erythritol 4-phosphate (MEP). The chain is 2-C-methyl-D-erythritol 4-phosphate cytidylyltransferase from Colwellia psychrerythraea (strain 34H / ATCC BAA-681) (Vibrio psychroerythus).